The following is a 295-amino-acid chain: uncharacterized protein (295 aa).

Disordered regions lie at residues 33–52 (VDAP…DSHS) and 180–295 (LSKA…AELK). Phosphoserine is present on S50. Polar residues-rich tracts occupy residues 205 to 217 (QKNS…SKLI) and 241 to 251 (TSRASVLSQSP). The span at 267-276 (EASEGPEDTP) shows a compositional bias: acidic residues. The segment covering 277–289 (ESSQSPEESVSAS) has biased composition (low complexity).

This is an uncharacterized protein from Homo sapiens (Human).